The sequence spans 2179 residues: Genome polyprotein (2179 aa).

Residues 1–20 are disordered; the sequence is MGAQVSTQKSGSHENQNILT. The N-myristoyl glycine; by host moiety is linked to residue G2. Residues 2 to 1491 lie on the Cytoplasmic side of the membrane; it reads GAQVSTQKSG…AMNQASMIIN (1490 aa). The amphipathic alpha-helix stretch occupies residues 564 to 584; sequence ALTEGLGDELEEVIVEKTKQT. Residues H876 and D894 each act as for protease 2A activity in the active site. Zn(2+) is bound by residues C911 and C913. Residue C965 is the For protease 2A activity of the active site. C971 and H973 together coordinate Zn(2+). The segment at 1101 to 1173 is membrane-binding; sequence NDGWFRKFND…HISNPTQEKR (73 aa). Positions 1101 to 1239 are oligomerization; the sequence is NDGWFRKFND…TPGSGKSLTT (139 aa). Positions 1122–1126 are RNA-binding; sequence ANKIS. Residues 1205–1361 enclose the SF3 helicase domain; that stretch reads KNKMVNYMQF…TTYTKNGKLN (157 aa). Zn(2+)-binding residues include C1369, C1372, C1381, and C1386. Residues 1369 to 1386 form a C4-type zinc finger; that stretch reads CKDCHQPSNFKKCCPLVC. Residues 1413–1420 are RNA-binding; the sequence is DFKSKMQI. Residues 1424 to 1429 form an oligomerization region; sequence LETLFQ. An intramembrane segment occupies 1492–1507; sequence TILMFVSTLGIVYVIY. Over 1508–2179 the chain is Cytoplasmic; sequence KLFAQTQGPY…VLRRRWLDLF (672 aa). Y1517 carries the O-(5'-phospho-RNA)-tyrosine modification. The Peptidase C3 domain maps to 1538 to 1715; the sequence is GPNTEFALSL…FSAQLKKQYF (178 aa). Catalysis depends on for protease 3C activity residues H1577, E1608, and C1683. Residues 1946–2060 form the RdRp catalytic domain; the sequence is GHLMAFDYSN…SYPYELDPQV (115 aa). 2 residues coordinate Mg(2+): D1952 and D2046.

The protein belongs to the picornaviruses polyprotein family. As to quaternary structure, interacts with capsid protein VP1 and capsid protein VP3 to form heterotrimeric protomers. Interacts with capsid protein VP0, and capsid protein VP3 to form heterotrimeric protomers. Five protomers subsequently associate to form pentamers which serve as building blocks for the capsid. Interacts with capsid protein VP2, capsid protein VP3 and capsid protein VP4 following cleavage of capsid protein VP0. Interacts with host ICAM1. In terms of assembly, interacts with capsid protein VP1 and capsid protein VP3 in the mature capsid. As to quaternary structure, interacts with capsid protein VP0 and capsid protein VP1 to form heterotrimeric protomers. Five protomers subsequently associate to form pentamers which serve as building blocks for the capsid. Interacts with capsid protein VP4 in the mature capsid. Interacts with protein 2C; this interaction may be important for virion morphogenesis. Interacts with capsid protein VP1 and capsid protein VP3. In terms of assembly, homodimer. As to quaternary structure, homohexamer; forms a hexameric ring structure with 6-fold symmetry characteristic of AAA+ ATPases. Interacts (via N-terminus) with host RTN3 (via reticulon domain); this interaction is important for viral replication. Interacts with capsid protein VP3; this interaction may be important for virion morphogenesis. Interacts with protein 3CD. In terms of assembly, homodimer. Interacts with host GBF1. Interacts (via GOLD domain) with host ACBD3 (via GOLD domain); this interaction allows the formation of a viral protein 3A/ACBD3 heterotetramer with a 2:2 stoichiometry, which will stimulate the recruitment of host PI4KB in order to synthesize PI4P at the viral RNA replication sites. As to quaternary structure, interacts with RNA-directed RNA polymerase. Interacts with protein 3AB and with RNA-directed RNA polymerase. In terms of assembly, interacts with Viral protein genome-linked and with protein 3CD. It depends on Mg(2+) as a cofactor. Specific enzymatic cleavages in vivo by the viral proteases yield processing intermediates and the mature proteins. Post-translationally, myristoylation is required for the formation of pentamers during virus assembly. Further assembly of 12 pentamers and a molecule of genomic RNA generates the provirion. In terms of processing, during virion maturation, immature virions are rendered infectious following cleavage of VP0 into VP4 and VP2. This maturation seems to be an autocatalytic event triggered by the presence of RNA in the capsid and it is followed by a conformational change infectious virion. Myristoylation is required during RNA encapsidation and formation of the mature virus particle. Post-translationally, VPg is uridylylated by the polymerase into VPg-pUpU. This acts as a nucleotide-peptide primer for the genomic RNA replication.

The protein resides in the virion. It localises to the host cytoplasm. The protein localises to the host cytoplasmic vesicle membrane. It is found in the host nucleus. The catalysed reaction is a ribonucleoside 5'-triphosphate + H2O = a ribonucleoside 5'-diphosphate + phosphate + H(+). The enzyme catalyses Selective cleavage of Tyr-|-Gly bond in the picornavirus polyprotein.. It catalyses the reaction RNA(n) + a ribonucleoside 5'-triphosphate = RNA(n+1) + diphosphate. It carries out the reaction Selective cleavage of Gln-|-Gly bond in the poliovirus polyprotein. In other picornavirus reactions Glu may be substituted for Gln, and Ser or Thr for Gly.. With respect to regulation, replication or transcription is subject to high level of random mutations by the nucleotide analog ribavirin. Forms an icosahedral capsid of pseudo T=3 symmetry with capsid proteins VP2 and VP3. The capsid is 300 Angstroms in diameter, composed of 60 copies of each capsid protein and enclosing the viral positive strand RNA genome. Capsid protein VP1 mainly forms the vertices of the capsid. Capsid protein VP1 interacts with host ICAM1 to provide virion attachment to target host cells. This attachment induces virion internalization. Tyrosine kinases are probably involved in the entry process. After binding to its receptor, the capsid undergoes conformational changes. Capsid protein VP1 N-terminus (that contains an amphipathic alpha-helix) and capsid protein VP4 are externalized. Together, they shape a pore in the host membrane through which viral genome is translocated to host cell cytoplasm. After genome has been released, the channel shrinks. Functionally, forms an icosahedral capsid of pseudo T=3 symmetry with capsid proteins VP2 and VP3. The capsid is 300 Angstroms in diameter, composed of 60 copies of each capsid protein and enclosing the viral positive strand RNA genome. In terms of biological role, lies on the inner surface of the capsid shell. After binding to the host receptor, the capsid undergoes conformational changes. Capsid protein VP4 is released, Capsid protein VP1 N-terminus is externalized, and together, they shape a pore in the host membrane through which the viral genome is translocated into the host cell cytoplasm. Its function is as follows. Component of immature procapsids, which is cleaved into capsid proteins VP4 and VP2 after maturation. Allows the capsid to remain inactive before the maturation step. Cysteine protease that cleaves viral polyprotein and specific host proteins. It is responsible for the autocatalytic cleavage between the P1 and P2 regions, which is the first cleavage occurring in the polyprotein. Also cleaves the host translation initiation factor EIF4G1, in order to shut down the capped cellular mRNA translation. Inhibits the host nucleus-cytoplasm protein and RNA trafficking by cleaving host members of the nuclear pores including NUP62 and NUP153. Counteracts stress granule formation probably by antagonizing its assembly or promoting its dissassembly. Functionally, plays an essential role in the virus replication cycle by acting as a viroporin. Creates a pore in the host endoplasmic reticulum and as a consequence releases Ca2+ in the cytoplasm of infected cell. In turn, high levels of cytoplasmic calcium may trigger membrane trafficking and transport of viral ER-associated proteins to viroplasms, sites of viral genome replication. In terms of biological role, induces and associates with structural rearrangements of intracellular membranes. Displays RNA-binding, nucleotide binding and NTPase activities. May play a role in virion morphogenesis and viral RNA encapsidation by interacting with the capsid protein VP3. Its function is as follows. Localizes the viral replication complex to the surface of membranous vesicles. Together with protein 3CD binds the Cis-Active RNA Element (CRE) which is involved in RNA synthesis initiation. Acts as a cofactor to stimulate the activity of 3D polymerase, maybe through a nucleid acid chaperone activity. Localizes the viral replication complex to the surface of membranous vesicles. It inhibits host cell endoplasmic reticulum-to-Golgi apparatus transport and causes the disassembly of the Golgi complex, possibly through GBF1 interaction. This would result in depletion of MHC, trail receptors and IFN receptors at the host cell surface. Plays an essential role in viral RNA replication by recruiting ACBD3 and PI4KB at the viral replication sites, thereby allowing the formation of the rearranged membranous structures where viral replication takes place. Functionally, acts as a primer for viral RNA replication and remains covalently bound to viral genomic RNA. VPg is uridylylated prior to priming replication into VPg-pUpU. The oriI viral genomic sequence may act as a template for this. The VPg-pUpU is then used as primer on the genomic RNA poly(A) by the RNA-dependent RNA polymerase to replicate the viral genome. During genome replication, the VPg-RNA linkage is removed by the host TDP2, thereby accelerating replication. During the late stage of the replication cycle, host TDP2 is excluded from sites of viral RNA synthesis and encapsidation, allowing for the generation of progeny virions. In terms of biological role, involved in the viral replication complex and viral polypeptide maturation. It exhibits protease activity with a specificity and catalytic efficiency that is different from protease 3C. Protein 3CD lacks polymerase activity. Protein 3CD binds to the 5'UTR of the viral genome. Its function is as follows. Major viral protease that mediates proteolytic processing of the polyprotein. Cleaves host EIF5B, contributing to host translation shutoff. Cleaves also host PABPC1, contributing to host translation shutoff. Cleaves host NLRP1, triggers host N-glycine-mediated degradation of the autoinhibitory NLRP1 N-terminal fragment. Replicates the viral genomic RNA on the surface of intracellular membranes. May form linear arrays of subunits that propagate along a strong head-to-tail interaction called interface-I. Covalently attaches UMP to a tyrosine of VPg, which is used to prime RNA synthesis. The positive stranded RNA genome is first replicated at virus induced membranous vesicles, creating a dsRNA genomic replication form. This dsRNA is then used as template to synthesize positive stranded RNA genomes. ss(+)RNA genomes are either translated, replicated or encapsidated. This is Genome polyprotein from Homo sapiens (Human).